A 438-amino-acid polypeptide reads, in one-letter code: GDP-mannose 6-dehydrogenase (438 aa).

Residues Tyr10, Val11, Asp30, Lys35, Thr86, and Thr124 each contribute to the NAD(+) site. GDP-alpha-D-mannuronate contacts are provided by Glu161, Lys210, Asn214, His217, Asn225, Tyr256, Tyr257, Arg259, Phe262, and Gly265. The active site involves Cys268. NAD(+) is bound at residue Lys271. Lys324 is a binding site for GDP-alpha-D-mannuronate. Arg331 contacts NAD(+).

This sequence belongs to the UDP-glucose/GDP-mannose dehydrogenase family.

It carries out the reaction GDP-alpha-D-mannose + 2 NAD(+) + H2O = GDP-alpha-D-mannuronate + 2 NADH + 3 H(+). Its pathway is glycan biosynthesis; alginate biosynthesis. Functionally, catalyzes the oxidation of guanosine diphospho-D-mannose (GDP-D-mannose) to GDP-D-mannuronic acid, a precursor for alginate polymerization. The alginate layer causes a mucoid phenotype and provides a protective barrier against host immune defenses and antibiotics. This Pseudomonas putida (strain ATCC 47054 / DSM 6125 / CFBP 8728 / NCIMB 11950 / KT2440) protein is GDP-mannose 6-dehydrogenase (algD).